A 120-amino-acid chain; its full sequence is Nascent polypeptide-associated complex protein (120 aa).

The 69-residue stretch at 12-80 (GMNPAKMKQM…VKEVPKSLEI (69 aa)) folds into the NAC-A/B domain.

The protein belongs to the NAC-alpha family. As to quaternary structure, homodimer. Interacts with the ribosome. Binds ribosomal RNA.

Contacts the emerging nascent chain on the ribosome. This chain is Nascent polypeptide-associated complex protein, found in Methanosarcina mazei (strain ATCC BAA-159 / DSM 3647 / Goe1 / Go1 / JCM 11833 / OCM 88) (Methanosarcina frisia).